The chain runs to 160 residues: Transcriptional repressor NrdR (160 aa).

The segment at C3–C34 is a zinc-finger region. The ATP-cone domain occupies P49–E139.

It belongs to the NrdR family. Zn(2+) serves as cofactor.

Its function is as follows. Negatively regulates transcription of bacterial ribonucleotide reductase nrd genes and operons by binding to NrdR-boxes. The sequence is that of Transcriptional repressor NrdR from Bordetella bronchiseptica (strain ATCC BAA-588 / NCTC 13252 / RB50) (Alcaligenes bronchisepticus).